Here is a 171-residue protein sequence, read N- to C-terminus: NADH-quinone oxidoreductase subunit B (171 aa).

4 residues coordinate [4Fe-4S] cluster: Cys-34, Cys-35, Cys-99, and Cys-128.

The protein belongs to the complex I 20 kDa subunit family. In terms of assembly, NDH-1 is composed of 14 different subunits. Subunits NuoB, C, D, E, F, and G constitute the peripheral sector of the complex. The cofactor is [4Fe-4S] cluster.

The protein localises to the cell inner membrane. The enzyme catalyses a quinone + NADH + 5 H(+)(in) = a quinol + NAD(+) + 4 H(+)(out). Functionally, NDH-1 shuttles electrons from NADH, via FMN and iron-sulfur (Fe-S) centers, to quinones in the respiratory chain. The immediate electron acceptor for the enzyme in this species is believed to be ubiquinone. Couples the redox reaction to proton translocation (for every two electrons transferred, four hydrogen ions are translocated across the cytoplasmic membrane), and thus conserves the redox energy in a proton gradient. This is NADH-quinone oxidoreductase subunit B from Sulfurihydrogenibium sp. (strain YO3AOP1).